The chain runs to 396 residues: Argininosuccinate synthase (396 aa).

Position 9–17 (9–17 (AYSGGLDTS)) interacts with ATP. Tyr85 is an L-citrulline binding site. Residue Gly115 coordinates ATP. Residues Thr117, Asn121, and Asp122 each contribute to the L-aspartate site. Asn121 provides a ligand contact to L-citrulline. L-citrulline is bound by residues Arg125, Ser173, Glu258, and Tyr270.

The protein belongs to the argininosuccinate synthase family. Type 1 subfamily. As to quaternary structure, homotetramer.

Its subcellular location is the cytoplasm. The catalysed reaction is L-citrulline + L-aspartate + ATP = 2-(N(omega)-L-arginino)succinate + AMP + diphosphate + H(+). The protein operates within amino-acid biosynthesis; L-arginine biosynthesis; L-arginine from L-ornithine and carbamoyl phosphate: step 2/3. The chain is Argininosuccinate synthase from Streptococcus agalactiae serotype III (strain NEM316).